Here is a 222-residue protein sequence, read N- to C-terminus: Glutathione S-transferase A2 (222 aa).

Ala2 carries the post-translational modification N-acetylalanine. The GST N-terminal domain maps to 3–83 (GKPVLHYFNA…YIATKYDLYG (81 aa)). The residue at position 4 (Lys4) is an N6-succinyllysine. Residues Tyr9, Lys45, 54–55 (QV), and 67–68 (QT) each bind glutathione. In terms of domain architecture, GST C-terminal spans 85 to 208 (DMKERALIDM…HPGSQRKPPL (124 aa)).

It belongs to the GST superfamily. Alpha family. As to quaternary structure, homodimer. Heterodimer of GSTA1 and GSTA2. In terms of tissue distribution, expressed in the kidney.

It carries out the reaction RX + glutathione = an S-substituted glutathione + a halide anion + H(+). Functionally, catalyzes the conjugation of glutathione to a large variety of electrophilic compounds. The sequence is that of Glutathione S-transferase A2 (Gsta2) from Mus musculus (Mouse).